The following is an 890-amino-acid chain: Alanine--tRNA ligase (890 aa).

Positions 573, 577, 675, and 679 each coordinate Zn(2+).

This sequence belongs to the class-II aminoacyl-tRNA synthetase family. Zn(2+) serves as cofactor.

It localises to the cytoplasm. The enzyme catalyses tRNA(Ala) + L-alanine + ATP = L-alanyl-tRNA(Ala) + AMP + diphosphate. Functionally, catalyzes the attachment of alanine to tRNA(Ala) in a two-step reaction: alanine is first activated by ATP to form Ala-AMP and then transferred to the acceptor end of tRNA(Ala). Also edits incorrectly charged Ser-tRNA(Ala) and Gly-tRNA(Ala) via its editing domain. This Streptomyces avermitilis (strain ATCC 31267 / DSM 46492 / JCM 5070 / NBRC 14893 / NCIMB 12804 / NRRL 8165 / MA-4680) protein is Alanine--tRNA ligase.